We begin with the raw amino-acid sequence, 636 residues long: DNA gyrase subunit B (636 aa).

Residues 421–535 (TELFIVEGDS…QGRVYIALPP (115 aa)) form the Toprim domain. Residues Glu427, Asp500, and Asp502 each coordinate Mg(2+).

Belongs to the type II topoisomerase GyrB family. Heterotetramer, composed of two GyrA and two GyrB chains. In the heterotetramer, GyrA contains the active site tyrosine that forms a transient covalent intermediate with DNA, while GyrB binds cofactors and catalyzes ATP hydrolysis. Requires Mg(2+) as cofactor. Mn(2+) serves as cofactor. Ca(2+) is required as a cofactor.

Its subcellular location is the cytoplasm. It catalyses the reaction ATP-dependent breakage, passage and rejoining of double-stranded DNA.. Functionally, a type II topoisomerase that negatively supercoils closed circular double-stranded (ds) DNA in an ATP-dependent manner to modulate DNA topology and maintain chromosomes in an underwound state. Negative supercoiling favors strand separation, and DNA replication, transcription, recombination and repair, all of which involve strand separation. Also able to catalyze the interconversion of other topological isomers of dsDNA rings, including catenanes and knotted rings. Type II topoisomerases break and join 2 DNA strands simultaneously in an ATP-dependent manner. The sequence is that of DNA gyrase subunit B from Thermotoga maritima (strain ATCC 43589 / DSM 3109 / JCM 10099 / NBRC 100826 / MSB8).